Reading from the N-terminus, the 603-residue chain is Aspartate--tRNA(Asp/Asn) ligase (603 aa).

The segment at 205-208 is aspartate; it reads QLFK. An L-aspartate-binding site is contributed by Arg-227. ATP is bound by residues 227 to 229 and Gln-236; that span reads RDE. His-463 contributes to the L-aspartate binding site. Residue Glu-497 participates in ATP binding. Arg-504 contributes to the L-aspartate binding site. Position 549–552 (549–552) interacts with ATP; sequence GMDR.

The protein belongs to the class-II aminoacyl-tRNA synthetase family. Type 1 subfamily. Homodimer.

Its subcellular location is the cytoplasm. The catalysed reaction is tRNA(Asx) + L-aspartate + ATP = L-aspartyl-tRNA(Asx) + AMP + diphosphate. Its function is as follows. Aspartyl-tRNA synthetase with relaxed tRNA specificity since it is able to aspartylate not only its cognate tRNA(Asp) but also tRNA(Asn). Reaction proceeds in two steps: L-aspartate is first activated by ATP to form Asp-AMP and then transferred to the acceptor end of tRNA(Asp/Asn). In Anaeromyxobacter dehalogenans (strain 2CP-1 / ATCC BAA-258), this protein is Aspartate--tRNA(Asp/Asn) ligase.